A 455-amino-acid polypeptide reads, in one-letter code: Dihydrolipoyllysine-residue succinyltransferase component of 2-oxoglutarate dehydrogenase complex, mitochondrial (455 aa).

The N-terminal 68 residues, 1-68 (MLSRSRCASR…RFFRTTAVCK (68 aa)), are a transit peptide targeting the mitochondrion. The region spanning 71–145 (VITVKTPAFA…EGGTPLFTLR (75 aa)) is the Lipoyl-binding domain. Position 82 is a phosphoserine (Ser-82). Lys-111 is modified (N6-lipoyllysine). Residue Lys-155 is modified to N6-acetyllysine. Residues 155–173 (KPAAAPAAAAPKAEPTVSA) are compositionally biased toward low complexity. The interval 155-220 (KPAAAPAAAA…PRAEAGAGVG (66 aa)) is disordered. A compositionally biased stretch (pro residues) spans 174–193 (VPPPPAAPIPTQMPPVPSPS). 5 positions are modified to N6-acetyllysine: Lys-269, Lys-274, Lys-275, Lys-279, and Lys-309. Residues His-426 and Asp-430 contribute to the active site.

It belongs to the 2-oxoacid dehydrogenase family. As to quaternary structure, the 2-oxoglutarate dehydrogenase complex is composed of OGDH (2-oxoglutarate dehydrogenase; E1), DLST (dihydrolipoamide succinyltransferase; E2), DLD (dihydrolipoamide dehydrogenase; E3) and the assembly factor KGD4. It contains multiple copies of the three enzymatic components (E1, E2 and E3). In the nucleus, the 2-oxoglutarate dehydrogenase complex associates with KAT2A. Interacts with ABHD11; this interaction maintains the functional lipoylation of the 2-oxoglutarate dehydrogenase complex. (R)-lipoate serves as cofactor.

The protein resides in the mitochondrion matrix. It is found in the nucleus. The enzyme catalyses N(6)-[(R)-dihydrolipoyl]-L-lysyl-[protein] + succinyl-CoA = N(6)-[(R)-S(8)-succinyldihydrolipoyl]-L-lysyl-[protein] + CoA. Its pathway is amino-acid degradation; L-lysine degradation via saccharopine pathway; glutaryl-CoA from L-lysine: step 6/6. It participates in carbohydrate metabolism; tricarboxylic acid cycle. In terms of biological role, dihydrolipoamide succinyltransferase (E2) component of the 2-oxoglutarate dehydrogenase complex. The 2-oxoglutarate dehydrogenase complex catalyzes the overall conversion of 2-oxoglutarate to succinyl-CoA and CO(2). The 2-oxoglutarate dehydrogenase complex is mainly active in the mitochondrion. A fraction of the 2-oxoglutarate dehydrogenase complex also localizes in the nucleus and is required for lysine succinylation of histones: associates with KAT2A on chromatin and provides succinyl-CoA to histone succinyltransferase KAT2A. This chain is Dihydrolipoyllysine-residue succinyltransferase component of 2-oxoglutarate dehydrogenase complex, mitochondrial, found in Bos taurus (Bovine).